The primary structure comprises 290 residues: MDYKHFKGKHANIVIEIISLLEKGVKKAQEILEKPDAGSYTKLENSSGDTPIKADLALDKFLEENFLSLENVKSVFSEEKETPVTKENGSYLIAYDPLDGSSVMEANFLVGTIIGVYEKDYKAQNLAASLYVVFGHKIELVVALEEVYRYGFYQNKFHFIETIVLENKGKIIASGGNQKDFSSGLKKALEGFFAENYRLRYSGSMVADVHHVLIKKGGMFSYPQKKLRKLFEVFPLALMVEKAKGEAFYFDKGVKKRLLEQSVESYHEKSECYLASQHEAHILEKYLKGE.

Residues glutamate 78, aspartate 96, leucine 98, and aspartate 99 each coordinate Mg(2+). Substrate contacts are provided by residues 99-102 (DGSS), tyrosine 201, and lysine 226. Glutamate 232 lines the Mg(2+) pocket.

This sequence belongs to the FBPase class 1 family. Homotetramer. Requires Mg(2+) as cofactor.

The protein resides in the cytoplasm. The catalysed reaction is beta-D-fructose 1,6-bisphosphate + H2O = beta-D-fructose 6-phosphate + phosphate. It functions in the pathway carbohydrate biosynthesis; gluconeogenesis. This is Fructose-1,6-bisphosphatase class 1 from Helicobacter pylori (strain Shi470).